We begin with the raw amino-acid sequence, 330 residues long: Methionyl-tRNA formyltransferase (330 aa).

(6S)-5,6,7,8-tetrahydrofolate is bound at residue 121-124; it reads SLLP.

Belongs to the Fmt family.

It catalyses the reaction L-methionyl-tRNA(fMet) + (6R)-10-formyltetrahydrofolate = N-formyl-L-methionyl-tRNA(fMet) + (6S)-5,6,7,8-tetrahydrofolate + H(+). Functionally, attaches a formyl group to the free amino group of methionyl-tRNA(fMet). The formyl group appears to play a dual role in the initiator identity of N-formylmethionyl-tRNA by promoting its recognition by IF2 and preventing the misappropriation of this tRNA by the elongation apparatus. The protein is Methionyl-tRNA formyltransferase of Burkholderia orbicola (strain MC0-3).